Reading from the N-terminus, the 120-residue chain is Large ribosomal subunit protein bL17 (120 aa).

The protein belongs to the bacterial ribosomal protein bL17 family. As to quaternary structure, part of the 50S ribosomal subunit. Contacts protein L32.

The protein is Large ribosomal subunit protein bL17 of Geobacillus kaustophilus (strain HTA426).